Reading from the N-terminus, the 469-residue chain is Calcium-binding mitochondrial carrier protein SCaMC-2 (469 aa).

Topologically, residues 1-189 (MLCLCLYVPL…ERQTGMWWRH (189 aa)) are mitochondrial intermembrane. EF-hand domains are found at residues 47-80 (TYRQ…QDHE), 78-113 (DHEK…LGVK), and 114-149 (ISEQ…HPVE). Ca(2+) is bound by residues Asp60, Asp62, Asp64, Gln66, and Glu71. 3 Solcar repeats span residues 184-270 (GMWW…IKRL), 278-363 (LRIH…LKNA), and 375-463 (PGVF…LKIT). Residues 190 to 207 (LVAGGGAGAVSRTCTAPL) traverse the membrane as a helical segment. The Mitochondrial matrix segment spans residues 208 to 244 (DRLKVLMQVHASRSNNMCIVGGFTQMIREGGARSLWR). A helical membrane pass occupies residues 245 to 264 (GNGINVLKIAPESAIKFMAY). The Mitochondrial intermembrane portion of the chain corresponds to 265 to 287 (EQIKRLIGSDQETLRIHERLVAG). Residues 288–301 (SLAGAIAQSSIYPM) form a helical membrane-spanning segment. Over 302–337 (EVLKTRMALRKTGQYSGMLDCARKILAREGMAAFYK) the chain is Mitochondrial matrix. A helical transmembrane segment spans residues 338 to 357 (GYVPNMLGIIPYAGIDLAVY). At 358–380 (ETLKNAWLQRYAVNSADPGVFVL) the chain is on the mitochondrial intermembrane side. Residues 381-398 (LACGTMSSTCGQLASYPL) form a helical membrane-spanning segment. The Mitochondrial matrix segment spans residues 399-437 (ALVRTRMQAQASMEGAPEVTMSSLFKQILRTEGAFGLYR). A helical membrane pass occupies residues 438–457 (GLAPNFMKVIPAVSISYVVY). Residues 458-469 (ENLKITLGVQSR) are Mitochondrial intermembrane-facing.

It belongs to the mitochondrial carrier (TC 2.A.29) family.

The protein localises to the mitochondrion inner membrane. Its function is as follows. Calcium-dependent mitochondrial solute carrier. Mitochondrial solute carriers shuttle metabolites, nucleotides, and cofactors through the mitochondrial inner membrane. May act as a ATP-Mg/Pi exchanger that mediates the transport of Mg-ATP in exchange for phosphate, catalyzing the net uptake or efflux of adenine nucleotides into or from the mitochondria. The protein is Calcium-binding mitochondrial carrier protein SCaMC-2 (SLC25A25) of Bos taurus (Bovine).